The sequence spans 110 residues: Large ribosomal subunit protein uL22 (110 aa).

This sequence belongs to the universal ribosomal protein uL22 family. Part of the 50S ribosomal subunit.

In terms of biological role, this protein binds specifically to 23S rRNA; its binding is stimulated by other ribosomal proteins, e.g. L4, L17, and L20. It is important during the early stages of 50S assembly. It makes multiple contacts with different domains of the 23S rRNA in the assembled 50S subunit and ribosome. The globular domain of the protein is located near the polypeptide exit tunnel on the outside of the subunit, while an extended beta-hairpin is found that lines the wall of the exit tunnel in the center of the 70S ribosome. This Pseudoalteromonas atlantica (strain T6c / ATCC BAA-1087) protein is Large ribosomal subunit protein uL22.